The chain runs to 111 residues: uncharacterized protein (111 aa).

Transmembrane regions (helical) follow at residues 18–38 (LNVF…LFVS) and 42–62 (LALA…RTFP).

The protein localises to the membrane. This is an uncharacterized protein from Saccharomyces cerevisiae (strain ATCC 204508 / S288c) (Baker's yeast).